We begin with the raw amino-acid sequence, 565 residues long: MNGKQLVAEALQAVLPDWSLDDIDVKIERPKDEKLGDYAFPTFTLAKTMRKAPNLIAVELAEKIDQGSFEKVEAVGPYINFFLDKSQTGAAILQEILADPENYGARDLGHGRNVLTEYSSPNIAKPMGMGHLRSTMIGEAIARILAKEGFKPIRIDYLGDWGTQFGKMMAAYKMWGNDADIEKDPINTLLSYYVRINREAEEHPEYDEDGREWFSKLEHGDEEAKRLWSWFREVSLERFKKVYDMLDVHFDSFTGEAFSAQMMDKPIQILREKGLLVKSQGAEIVDLEKYNLPPLMVIKSNGTSTYITRDLATAMYRKKTYGFYKSIYVVGQEQEVYFQQLRACLKEMGFDWADDIVHISFGLMSINGQKMSTRKGNVVNLEDVLNESVDLARKQISEKNAGLKNADEVAKQVGIGAVVFHDLKNYRRNPIDFNLEEVVKFEGETGPYVQYARARGESLLRKSGITDFSDADLTKIGAEEWDLVSFMARYADTIQKAMETYDPSAIAKYALELAKRFNKYYAHTRILVDDVDEDVKKARLAVVQAVSHVIKSALDLLDVKAPDEM.

A 'HIGH' region motif is present at residues 121-131 (PNIAKPMGMGH).

The protein belongs to the class-I aminoacyl-tRNA synthetase family. In terms of assembly, monomer.

It is found in the cytoplasm. It catalyses the reaction tRNA(Arg) + L-arginine + ATP = L-arginyl-tRNA(Arg) + AMP + diphosphate. This Lactobacillus delbrueckii subsp. bulgaricus (strain ATCC BAA-365 / Lb-18) protein is Arginine--tRNA ligase.